The sequence spans 295 residues: Protease Rv3090 (295 aa).

2 helical membrane passes run 2 to 22 (TWQIVFVVICVIVAGVAALFW) and 37 to 57 (VTIAAVAAAAVFFFLGCFTIV).

It is found in the cell membrane. The protein localises to the secreted. Its subcellular location is the cell wall. In terms of biological role, protease that triggers late cell apoptosis and contributes to the pathogenicity and dissemination of M.tuberculosis. In a mouse model of infection, can induce hepatocyte and lung cell apoptosis and cause pathological damage to the spleen, liver and lungs. Specifically stimulates the secretion of inflammatory cytokines including TNF-alpha, IL-6 and IL-1 beta. Can degrade casein in vitro. This is Protease Rv3090 from Mycobacterium tuberculosis (strain ATCC 25618 / H37Rv).